We begin with the raw amino-acid sequence, 278 residues long: uncharacterized protein (278 aa).

Positions 251–278 (TLSENKKQKSSSTSPETDSDMSEFFGDN) are disordered.

This is an uncharacterized protein from Aedes pseudoscutellaris reovirus (isolate France) (ApRV).